The primary structure comprises 118 residues: Non-specific lipid-transfer protein 5 (118 aa).

The first 25 residues, 1–25 (MEGLLKLSTLVIVCMLVTAPMASEA), serve as a signal peptide directing secretion. 4 disulfide bridges follow: Cys29/Cys76, Cys39/Cys53, Cys54/Cys100, and Cys74/Cys114.

Belongs to the plant LTP family.

Plant non-specific lipid-transfer proteins transfer phospholipids as well as galactolipids across membranes. May play a role in wax or cutin deposition in the cell walls of expanding epidermal cells and certain secretory tissues. The polypeptide is Non-specific lipid-transfer protein 5 (LTP5) (Arabidopsis thaliana (Mouse-ear cress)).